The sequence spans 67 residues: MAIFRIDEIRNMSSEELEEELRKLEVELIRERGAVRAGGAPEKPGRIREIRRTIARMKTVQRERVRK.

The protein belongs to the universal ribosomal protein uL29 family.

The polypeptide is Large ribosomal subunit protein uL29 (Methanothrix thermoacetophila (strain DSM 6194 / JCM 14653 / NBRC 101360 / PT) (Methanosaeta thermophila)).